Here is a 600-residue protein sequence, read N- to C-terminus: ATP-dependent zinc metalloprotease FtsH 1 (600 aa).

Residues 1–8 (MKTHYFKK) lie on the Cytoplasmic side of the membrane. The helical transmembrane segment at 9 to 29 (IFNLKFLVIFFSILFCILLIL) threads the bilayer. The Extracellular portion of the chain corresponds to 30 to 130 (DLTFERRIKG…PKTDFHLSEL (101 aa)). The chain crosses the membrane as a helical span at residues 131 to 151 (ILSLVPIVSSTIFMFYIISNI). The Cytoplasmic segment spans residues 152-600 (KKSSGKLNSN…IEQLVVNTKK (449 aa)). Residue 215–222 (GPPGTGKT) participates in ATP binding. Residue histidine 437 participates in Zn(2+) binding. Glutamate 438 is a catalytic residue. Zn(2+)-binding residues include histidine 441 and aspartate 513.

This sequence in the central section; belongs to the AAA ATPase family. In the C-terminal section; belongs to the peptidase M41 family. As to quaternary structure, homohexamer. The cofactor is Zn(2+).

It is found in the cell membrane. Its function is as follows. Acts as a processive, ATP-dependent zinc metallopeptidase for both cytoplasmic and membrane proteins. Plays a role in the quality control of integral membrane proteins. This chain is ATP-dependent zinc metalloprotease FtsH 1, found in Phytoplasma mali (strain AT).